Consider the following 80-residue polypeptide: Exodeoxyribonuclease 7 small subunit (80 aa).

This sequence belongs to the XseB family. As to quaternary structure, heterooligomer composed of large and small subunits.

Its subcellular location is the cytoplasm. It carries out the reaction Exonucleolytic cleavage in either 5'- to 3'- or 3'- to 5'-direction to yield nucleoside 5'-phosphates.. Its function is as follows. Bidirectionally degrades single-stranded DNA into large acid-insoluble oligonucleotides, which are then degraded further into small acid-soluble oligonucleotides. The chain is Exodeoxyribonuclease 7 small subunit from Phenylobacterium zucineum (strain HLK1).